The chain runs to 240 residues: Probable septum site-determining protein MinC (240 aa).

The protein belongs to the MinC family. In terms of assembly, interacts with MinD and FtsZ.

In terms of biological role, cell division inhibitor that blocks the formation of polar Z ring septums. Rapidly oscillates between the poles of the cell to destabilize FtsZ filaments that have formed before they mature into polar Z rings. Prevents FtsZ polymerization. This is Probable septum site-determining protein MinC from Acinetobacter baumannii (strain ACICU).